Here is a 135-residue protein sequence, read N- to C-terminus: MNRSCAMKSCVLILLLALLCAERAQGLNCYNCTMIPFGNTCSSTATCPYPDGVCTIQVAEVVVSSVRLKVKSNLCLPGCPKSPQTPEVLGTVVHVNTDCCNTDLCNAAGPTGGSTWTMAGVLLFILGSVLLQTLL.

The signal sequence occupies residues 1 to 26 (MNRSCAMKSCVLILLLALLCAERAQG). Residues 27–119 (LNCYNCTMIP…PTGGSTWTMA (93 aa)) enclose the UPAR/Ly6 domain. 5 disulfides stabilise this stretch: cysteine 29–cysteine 54, cysteine 32–cysteine 41, cysteine 47–cysteine 75, cysteine 79–cysteine 99, and cysteine 100–cysteine 105. Residue glycine 113 is the site of GPI-anchor amidated glycine attachment. A propeptide spans 114 to 135 (STWTMAGVLLFILGSVLLQTLL) (removed in mature form).

It localises to the cell membrane. The protein is Lymphocyte antigen 6B (Ly6b) of Rattus norvegicus (Rat).